Consider the following 519-residue polypeptide: Mannuronan C5-epimerase (519 aa).

The signal sequence occupies residues 1-25; sequence MNLHPHLRHSLLASALLLASGLATA. 6 PbH1 repeats span residues 219 to 246, 281 to 303, 305 to 328, 330 to 352, 354 to 376, and 377 to 399; these read GTET…SISQ, TQDF…DPHD, SHRL…IVSR, VNDS…VIDR, SVNN…TLYE, and SGDN…RVRN. The Proton acceptor role is filled by His302.

Belongs to the D-mannuronate C5-epimerase family.

It localises to the periplasm. The catalysed reaction is [(1-&gt;4)-beta-D-mannuronosyl](n) = [alginate](n). It functions in the pathway glycan biosynthesis; alginate biosynthesis. Functionally, catalyzes the epimerization of beta-D-mannuronate to alpha-L-guluronate during the synthesis of the linear polysaccharide alginate. In addition, is part of a periplasmic protein complex that protects alginate from degradation by AlgL by channeling the newly formed alginate polymer through a scaffold that transfers the alginate polymer through the periplasmic space to the outer membrane secretin AlgE. This chain is Mannuronan C5-epimerase (algG), found in Pseudomonas putida (strain ATCC 47054 / DSM 6125 / CFBP 8728 / NCIMB 11950 / KT2440).